We begin with the raw amino-acid sequence, 96 residues long: YcgL domain-containing protein Csal_1462 (96 aa).

The region spanning 4–88 is the YcgL domain; the sequence is RLCEIFKSPR…ARESYLLDLY (85 aa).

The protein is YcgL domain-containing protein Csal_1462 of Chromohalobacter salexigens (strain ATCC BAA-138 / DSM 3043 / CIP 106854 / NCIMB 13768 / 1H11).